The following is a 228-amino-acid chain: SPbeta prophage-derived uncharacterized protein YomL (228 aa).

Positions 1-28 (MRKKRVITCVMAASLTLGSLLPAGYATA) are cleaved as a signal peptide.

The chain is SPbeta prophage-derived uncharacterized protein YomL (yomL) from Bacillus subtilis (strain 168).